A 223-amino-acid polypeptide reads, in one-letter code: Holliday junction branch migration complex subunit RuvA (223 aa).

Residues 1–64 (MIGKLTGRLD…EDLLQLFGFL (64 aa)) are domain I. The interval 65–143 (SPYEKEWHRL…AVMAMGGTLD (79 aa)) is domain II. The tract at residues 144–171 (DAMDDVVDDMPGESAAPAPAPQPRAPKR) is flexible linker. The tract at residues 148–177 (DVVDDMPGESAAPAPAPQPRAPKRPASNAQ) is disordered. Residues 172–223 (PASNAQAEALSALQNLGYGPSDAAQAVAQAAESASNTPELIRAALRLLAPKE) form a domain III region.

Belongs to the RuvA family. As to quaternary structure, homotetramer. Forms an RuvA(8)-RuvB(12)-Holliday junction (HJ) complex. HJ DNA is sandwiched between 2 RuvA tetramers; dsDNA enters through RuvA and exits via RuvB. An RuvB hexamer assembles on each DNA strand where it exits the tetramer. Each RuvB hexamer is contacted by two RuvA subunits (via domain III) on 2 adjacent RuvB subunits; this complex drives branch migration. In the full resolvosome a probable DNA-RuvA(4)-RuvB(12)-RuvC(2) complex forms which resolves the HJ.

The protein resides in the cytoplasm. Functionally, the RuvA-RuvB-RuvC complex processes Holliday junction (HJ) DNA during genetic recombination and DNA repair, while the RuvA-RuvB complex plays an important role in the rescue of blocked DNA replication forks via replication fork reversal (RFR). RuvA specifically binds to HJ cruciform DNA, conferring on it an open structure. The RuvB hexamer acts as an ATP-dependent pump, pulling dsDNA into and through the RuvAB complex. HJ branch migration allows RuvC to scan DNA until it finds its consensus sequence, where it cleaves and resolves the cruciform DNA. This Jannaschia sp. (strain CCS1) protein is Holliday junction branch migration complex subunit RuvA.